The following is a 398-amino-acid chain: Putative transposase y4qJ (398 aa).

Belongs to the transposase 32 family.

The sequence is that of Putative transposase y4qJ from Sinorhizobium fredii (strain NBRC 101917 / NGR234).